The chain runs to 796 residues: Nuclear GTPase SLIP-GC (796 aa).

Residues 1 to 22 (MAETKDVFGQEPHPVEDDLYKE) are compositionally biased toward basic and acidic residues. The interval 1-35 (MAETKDVFGQEPHPVEDDLYKERTRKRRKSDRDQR) is disordered. 107–114 (GSTGAGKS) serves as a coordination point for GTP. 2 coiled-coil regions span residues 158 to 185 (SDQE…EEAD) and 745 to 775 (KELA…RLRK).

As to expression, expressed in germinal center B-cell and in lymphomas derived from germinal center B-cell.

The protein localises to the nucleus speckle. Nuclear GTPase found in germinal center B-cells, where it may inhibit function of the activation-induced cytidine deaminase AICDA. Reduces somatic hypermutation in B-cells which may enhance genome stability. In Homo sapiens (Human), this protein is Nuclear GTPase SLIP-GC (NUGGC).